We begin with the raw amino-acid sequence, 172 residues long: RNA silencing suppressor p19 (172 aa).

Residues Met-1–Asp-20 show a composition bias toward basic and acidic residues. The tract at residues Met-1–Ser-38 is disordered.

It belongs to the tombusviruses protein p19 family. Homodimer.

Functionally, acts as a suppressor of RNA-mediated gene silencing, also known as post-transcriptional gene silencing (PTGS), a mechanism of plant viral defense that limits the accumulation of viral RNAs. Binds to short interfering RNAs (siRNAs) with high affinity. Acts as a molecular caliper to specifically select siRNAs based on the length of the duplex region of the RNA. This is RNA silencing suppressor p19 from Capsicum annuum (Capsicum pepper).